We begin with the raw amino-acid sequence, 275 residues long: MNIQFSKMHGLGNDFMVIDNVTQNVFLSKDTISRLADRNFGIGFDQLLMIEPPYDPELDFHYRIFNADGSEVEQCGNGARCFARFVKMKGLTQKRIINVSTAKGKIQLKIEHDGNITVDMGKPILEPAKVPFEAQKEEKTYILRVEDHTVLCGVVSIGNPHCVVLVDDIDNAPVETLGPLLENHERFPNKVNVGFLEIKSRDHARLRVWERGVGETLACGTGACAAAVVGQLQDKLNPHCTIELPGGELRLFWQPGQSVKMTGTADFVFDGQIQI.

Residues N13, Q46, and N66 each contribute to the substrate site. C75 (proton donor) is an active-site residue. Substrate-binding positions include 76 to 77, N159, N192, and 210 to 211; these read GN and ER. Residue C219 is the Proton acceptor of the active site. 220-221 provides a ligand contact to substrate; that stretch reads GT.

Belongs to the diaminopimelate epimerase family. Homodimer.

It is found in the cytoplasm. The catalysed reaction is (2S,6S)-2,6-diaminopimelate = meso-2,6-diaminopimelate. It functions in the pathway amino-acid biosynthesis; L-lysine biosynthesis via DAP pathway; DL-2,6-diaminopimelate from LL-2,6-diaminopimelate: step 1/1. Functionally, catalyzes the stereoinversion of LL-2,6-diaminopimelate (L,L-DAP) to meso-diaminopimelate (meso-DAP), a precursor of L-lysine and an essential component of the bacterial peptidoglycan. In Psychromonas ingrahamii (strain DSM 17664 / CCUG 51855 / 37), this protein is Diaminopimelate epimerase.